A 95-amino-acid chain; its full sequence is Small ribosomal subunit protein uS17 (95 aa).

Belongs to the universal ribosomal protein uS17 family. In terms of assembly, part of the 30S ribosomal subunit.

Functionally, one of the primary rRNA binding proteins, it binds specifically to the 5'-end of 16S ribosomal RNA. This chain is Small ribosomal subunit protein uS17, found in Synechococcus sp. (strain CC9902).